The chain runs to 1108 residues: Isoleucine--tRNA ligase (1108 aa).

The 'HIGH' region signature appears at 53–63 (PFANGLPHYGH). The 'KMSKS' region motif lies at 654 to 658 (KLSKR). Residue Lys657 participates in ATP binding.

The protein belongs to the class-I aminoacyl-tRNA synthetase family. IleS type 2 subfamily. As to quaternary structure, monomer. Requires Zn(2+) as cofactor.

Its subcellular location is the cytoplasm. It catalyses the reaction tRNA(Ile) + L-isoleucine + ATP = L-isoleucyl-tRNA(Ile) + AMP + diphosphate. In terms of biological role, catalyzes the attachment of isoleucine to tRNA(Ile). As IleRS can inadvertently accommodate and process structurally similar amino acids such as valine, to avoid such errors it has two additional distinct tRNA(Ile)-dependent editing activities. One activity is designated as 'pretransfer' editing and involves the hydrolysis of activated Val-AMP. The other activity is designated 'posttransfer' editing and involves deacylation of mischarged Val-tRNA(Ile). The chain is Isoleucine--tRNA ligase from Rickettsia bellii (strain OSU 85-389).